We begin with the raw amino-acid sequence, 1048 residues long: Putative truncated guanine nucleotide exchange factor SDC25 (1048 aa).

Disordered stretches follow at residues 208-242 (SKQGTSCSSETSHHSPSAPFQRRRRGTIFSNVSGS) and 419-444 (LNLDNAKDKKNGSQNTDIQEEEDEYE). Positions 212–224 (TSCSSETSHHSPS) are enriched in low complexity. The N-terminal Ras-GEF domain maps to 578 to 710 (SNNRIKGGSK…LLKEVNQKFK (133 aa)). The Ras-GEF domain maps to 748 to 995 (DPVLFATQLT…YQLSLIIEPK (248 aa)). Residues 997–1048 (RKKVVPNSNSNNKSQEKSRDDQTDEGKTSTKKDRFPKFQLHKTKKKAPKVSK) form a disordered region. Residues 1010–1032 (SQEKSRDDQTDEGKTSTKKDRFP) are compositionally biased toward basic and acidic residues. The segment covering 1035 to 1048 (QLHKTKKKAPKVSK) has biased composition (basic residues).

Its function is as follows. Promotes the exchange of Ras-bound GDP by GTP. The chain is Putative truncated guanine nucleotide exchange factor SDC25 (SDC25) from Saccharomyces cerevisiae (strain ATCC 204508 / S288c) (Baker's yeast).